The chain runs to 947 residues: Protein translocase subunit SecA 1 (947 aa).

ATP is bound by residues Gln83, 101 to 105, and Asp490; that span reads GEGKT. The interval 860–947 is disordered; the sequence is AKAQEQTGQG…KTSKPTRRRG (88 aa). Residues 925–934 are compositionally biased toward basic and acidic residues; it reads TRRERREAAR. Basic residues predominate over residues 935-947; that stretch reads KQAKTSKPTRRRG.

The protein belongs to the SecA family. In terms of assembly, monomer and homodimer. Part of the essential Sec protein translocation apparatus which comprises SecA, SecYEG and auxiliary proteins SecDF. Other proteins may also be involved.

The protein localises to the cell membrane. The protein resides in the cytoplasm. It catalyses the reaction ATP + H2O + cellular proteinSide 1 = ADP + phosphate + cellular proteinSide 2.. Part of the Sec protein translocase complex. Interacts with the SecYEG preprotein conducting channel. Has a central role in coupling the hydrolysis of ATP to the transfer of proteins into and across the cell membrane, serving as an ATP-driven molecular motor driving the stepwise translocation of polypeptide chains across the membrane. The protein is Protein translocase subunit SecA 1 of Mycobacterium sp. (strain JLS).